The sequence spans 388 residues: F-box protein At5g42460 (388 aa).

The F-box domain occupies methionine 1–glutamine 47.

This chain is F-box protein At5g42460, found in Arabidopsis thaliana (Mouse-ear cress).